Reading from the N-terminus, the 195-residue chain is Guanylate kinase (195 aa).

The region spanning 10-189 (GRLIVFSAPS…TVDAVATRIA (180 aa)) is the Guanylate kinase-like domain. Residue 17–24 (APSGTGKS) coordinates ATP.

This sequence belongs to the guanylate kinase family.

The protein localises to the cytoplasm. The enzyme catalyses GMP + ATP = GDP + ADP. Functionally, essential for recycling GMP and indirectly, cGMP. This chain is Guanylate kinase, found in Chlorobaculum tepidum (strain ATCC 49652 / DSM 12025 / NBRC 103806 / TLS) (Chlorobium tepidum).